Consider the following 202-residue polypeptide: Holliday junction branch migration complex subunit RuvA (202 aa).

The tract at residues 1–64 (MIDFLKGRLV…ETALEMFGFS (64 aa)) is domain I. The tract at residues 65-143 (SELDRTAFLL…KQQVAVSAEL (79 aa)) is domain II. The interval 144–152 (PASDGVPVL) is flexible linker. The segment at 152-202 (LAGRAENEALAALISLGYTPREAREALNRLPDRKLDAAGLVHAALRIMGSQ) is domain III.

Belongs to the RuvA family. In terms of assembly, homotetramer. Forms an RuvA(8)-RuvB(12)-Holliday junction (HJ) complex. HJ DNA is sandwiched between 2 RuvA tetramers; dsDNA enters through RuvA and exits via RuvB. An RuvB hexamer assembles on each DNA strand where it exits the tetramer. Each RuvB hexamer is contacted by two RuvA subunits (via domain III) on 2 adjacent RuvB subunits; this complex drives branch migration. In the full resolvosome a probable DNA-RuvA(4)-RuvB(12)-RuvC(2) complex forms which resolves the HJ.

It localises to the cytoplasm. Functionally, the RuvA-RuvB-RuvC complex processes Holliday junction (HJ) DNA during genetic recombination and DNA repair, while the RuvA-RuvB complex plays an important role in the rescue of blocked DNA replication forks via replication fork reversal (RFR). RuvA specifically binds to HJ cruciform DNA, conferring on it an open structure. The RuvB hexamer acts as an ATP-dependent pump, pulling dsDNA into and through the RuvAB complex. HJ branch migration allows RuvC to scan DNA until it finds its consensus sequence, where it cleaves and resolves the cruciform DNA. The chain is Holliday junction branch migration complex subunit RuvA from Desulforudis audaxviator (strain MP104C).